A 277-amino-acid chain; its full sequence is Probable xyloglucan endotransglucosylase/hydrolase protein 11 (277 aa).

The first 24 residues, 1–24 (MRGSDQKILLMVMVVVAVVAAAQG), serve as a signal peptide directing secretion. The GH16 domain maps to 32–209 (VTWGNNYYQT…PKQMPYIAKF (178 aa)). An N-linked (GlcNAc...) asparagine glycan is attached at asparagine 50. Glutamate 107 serves as the catalytic Nucleophile. Xyloglucan contacts are provided by residues 123–125 (NTN) and 133–135 (GKD). The N-linked (GlcNAc...) asparagine glycan is linked to asparagine 194. Intrachain disulfides connect cysteine 217–cysteine 227 and cysteine 260–cysteine 273. Arginine 265 contributes to the xyloglucan binding site.

It belongs to the glycosyl hydrolase 16 family. XTH group 1 subfamily. Post-translationally, contains at least one intrachain disulfide bond essential for its enzymatic activity.

The protein resides in the secreted. It is found in the cell wall. The protein localises to the extracellular space. Its subcellular location is the apoplast. The catalysed reaction is breaks a beta-(1-&gt;4) bond in the backbone of a xyloglucan and transfers the xyloglucanyl segment on to O-4 of the non-reducing terminal glucose residue of an acceptor, which can be a xyloglucan or an oligosaccharide of xyloglucan.. Functionally, may catalyze xyloglucan endohydrolysis (XEH) and/or endotransglycosylation (XET). Cleaves and religates xyloglucan polymers, an essential constituent of the primary cell wall, and thereby participates in cell wall construction of growing tissues. This chain is Probable xyloglucan endotransglucosylase/hydrolase protein 11 (XTH11), found in Arabidopsis thaliana (Mouse-ear cress).